Here is a 46-residue protein sequence, read N- to C-terminus: Esculentin-1SEa (46 aa).

Cysteines 40 and 46 form a disulfide.

In terms of tissue distribution, expressed by the skin glands.

The protein localises to the secreted. Functionally, mast cell degranulating peptide. Causes histamine release from rat peritoneal mast cells in vitro. Has antibacterial activity against the Gram-negative bacterium E.coli K12 and Gram-positive bacterium M.luteus NCT C2665. This chain is Esculentin-1SEa, found in Lithobates sevosus (Dusky gopher frog).